The following is a 471-amino-acid chain: Monocarboxylate transporter 4 (471 aa).

At 1 to 17 the chain is on the cytoplasmic side; it reads MGGAVVDEGPTGIKAPD. The chain crosses the membrane as a helical span at residues 18–38; the sequence is GGWGWAVLFGCFIITGFSYAF. The Extracellular segment spans residues 39 to 61; that stretch reads PKAVSVFFKELMHEFGIGYSDTA. The chain crosses the membrane as a helical span at residues 62–82; that stretch reads WISSILLAMLYGTGPLCSMCV. Topologically, residues 83 to 84 are cytoplasmic; the sequence is NR. The chain crosses the membrane as a helical span at residues 85–105; that stretch reads FGCRPVMLVGGLFASLGMVAA. The Extracellular portion of the chain corresponds to 106-109; it reads SFCR. A helical transmembrane segment spans residues 110–130; sequence SIIQIYLTTGVITGLGLALNF. At 131–149 the chain is on the cytoplasmic side; that stretch reads QPSLIMLNRYFNKRRPMAN. Residues 150 to 170 traverse the membrane as a helical segment; the sequence is GLAAAGSPVFLCALSPLGQLL. Topologically, residues 171 to 179 are extracellular; the sequence is QDHYGWRGG. A helical membrane pass occupies residues 180 to 200; that stretch reads FLILGGLLLNCCVCAALMRPL. The Cytoplasmic portion of the chain corresponds to 201-231; it reads VAPQASGGAEPHGPQRPSPRLLDLSVFRDRG. Residues 232–252 traverse the membrane as a helical segment; that stretch reads FLIYAVAASIMVLGLFVPPVF. The Extracellular segment spans residues 253 to 267; it reads VVSYAKDMGVPDTKA. The chain crosses the membrane as a helical span at residues 268-288; sequence AFLLTILGFIDIFARPTAGFI. Residues 289-298 lie on the Cytoplasmic side of the membrane; sequence TGLKKVRPYS. A helical membrane pass occupies residues 299–319; that stretch reads VYLFSFAMFFNGFTDLTGSTA. Residues 320–321 are Extracellular-facing; sequence SD. Residues 322-342 form a helical membrane-spanning segment; it reads YGGLVVFCIFFGISYGMVGAL. The Cytoplasmic portion of the chain corresponds to 343–355; that stretch reads QFEVLMAIVGTQK. Residues 356–376 traverse the membrane as a helical segment; sequence FSSAIGLVLLLEAVAVLIGPP. Residues 377 to 391 lie on the Extracellular side of the membrane; sequence SGGKLLDATKVYKYV. Residues 392–412 traverse the membrane as a helical segment; sequence FILAGAEVLTSSLVLLLGNFF. Residues 413 to 471 are Cytoplasmic-facing; it reads CIGKRKRPEVTKPEEVASEEEKLHKPPVDVRVDSREVEHFLKAEPEKNGEVVHTPETSV. 2 basolateral sorting signal regions span residues 429–447 and 447–471; these read ASEEEKLHKPPVDVRVDSR and REVEHFLKAEPEKNGEVVHTPETSV. A Phosphoserine modification is found at serine 430. Phosphothreonine is present on threonine 466. Position 470 is a phosphoserine (serine 470).

It belongs to the major facilitator superfamily. Monocarboxylate porter (TC 2.A.1.13) family. Interacts with BSG; interaction mediates SLC16A3 targeting to the plasma membrane. As to expression, detected in testis, small intestine, parotid gland, lung and brain. Small amounts are detected in heart, kidney and spleen. Expressed in skeletal muscle.

It is found in the cell membrane. Its subcellular location is the basolateral cell membrane. It catalyses the reaction (S)-lactate(in) + H(+)(in) = (S)-lactate(out) + H(+)(out). The enzyme catalyses pyruvate(out) + H(+)(out) = pyruvate(in) + H(+)(in). Its function is as follows. Proton-dependent transporter of monocarboxylates such as L-lactate and pyruvate. Plays a predominant role in the L-lactate efflux from highly glycolytic cells. This Rattus norvegicus (Rat) protein is Monocarboxylate transporter 4 (Slc16a3).